A 374-amino-acid polypeptide reads, in one-letter code: Pectinesterase (374 aa).

An N-terminal signal peptide occupies residues Met1–Gly31. 2 N-linked (GlcNAc...) asparagine glycosylation sites follow: Asn58 and Asn124. Thr133 and Gln163 together coordinate substrate. Asp186 serves as the catalytic Proton donor. Residues Cys200 and Cys220 are joined by a disulfide bond. Asp207 functions as the Nucleophile in the catalytic mechanism. Residue Asn230 is glycosylated (N-linked (GlcNAc...) asparagine). Arg275 and Trp277 together coordinate substrate. A glycan (N-linked (GlcNAc...) asparagine) is linked at Asn303.

This sequence belongs to the pectinesterase family. As to expression, pollen, and at much lower levels in pistils and petals.

The protein resides in the secreted. The protein localises to the cell wall. The catalysed reaction is [(1-&gt;4)-alpha-D-galacturonosyl methyl ester](n) + n H2O = [(1-&gt;4)-alpha-D-galacturonosyl](n) + n methanol + n H(+). It functions in the pathway glycan metabolism; pectin degradation; 2-dehydro-3-deoxy-D-gluconate from pectin: step 1/5. Functionally, may play a role in pollen germination and/or tube growth. This is Pectinesterase (PPE1) from Petunia integrifolia (Violet-flowered petunia).